Reading from the N-terminus, the 161-residue chain is UPF0178 protein BOV_1904 (161 aa).

Belongs to the UPF0178 family.

This Brucella ovis (strain ATCC 25840 / 63/290 / NCTC 10512) protein is UPF0178 protein BOV_1904.